The primary structure comprises 298 residues: Lipoyl synthase (298 aa).

Residues Cys-40, Cys-45, Cys-51, Cys-67, Cys-71, Cys-74, and Ser-280 each contribute to the [4Fe-4S] cluster site. The region spanning 53–269 is the Radical SAM core domain; that stretch reads AVRKTATFMI…KEIALSKGFS (217 aa).

The protein belongs to the radical SAM superfamily. Lipoyl synthase family. The cofactor is [4Fe-4S] cluster.

The protein resides in the cytoplasm. It catalyses the reaction [[Fe-S] cluster scaffold protein carrying a second [4Fe-4S](2+) cluster] + N(6)-octanoyl-L-lysyl-[protein] + 2 oxidized [2Fe-2S]-[ferredoxin] + 2 S-adenosyl-L-methionine + 4 H(+) = [[Fe-S] cluster scaffold protein] + N(6)-[(R)-dihydrolipoyl]-L-lysyl-[protein] + 4 Fe(3+) + 2 hydrogen sulfide + 2 5'-deoxyadenosine + 2 L-methionine + 2 reduced [2Fe-2S]-[ferredoxin]. Its pathway is protein modification; protein lipoylation via endogenous pathway; protein N(6)-(lipoyl)lysine from octanoyl-[acyl-carrier-protein]. In terms of biological role, catalyzes the radical-mediated insertion of two sulfur atoms into the C-6 and C-8 positions of the octanoyl moiety bound to the lipoyl domains of lipoate-dependent enzymes, thereby converting the octanoylated domains into lipoylated derivatives. In Bacillus cereus (strain B4264), this protein is Lipoyl synthase.